The chain runs to 655 residues: MEFIYRYAWLIPILPFLGSMIIGLGLISLRRATQTLRWRFAFFNIVLLGIALIFSISILISQLNGHPPYKWLIEWIVTNQFSLEIGYSIDPLTSVMLVLVTSVAILVMIYSDSYMSYDQGYVRFFAYLSLFTASMLGLVLSPNLVQIYVFWELVGMCSYLLIGFWFTRPAAADACQKAFVTNRVGDFGLFLGILGLYWVTGSFEFQTISNRLSNVLLGDFVLPGSHPVQVELLVLFNLLVFLGPMAKSAQFPLHVWLPDAMEGPTPISALIHAATMVAAGVFLVARMFPIFNQFPIVMGFIAWIGAITAIIAAIIAVTQNDLKKGLAYSTISQLGYMIMAMGVGSYTAGLFHLITHAYSKALLFLGSGSVIHGMEPVVGFNPSKNQNMLFMGKMREFMPVTAITFLLGTLSLCGIPPMACFWSKDEILSQTFQAQPILWIIAWVTAGLTSFYMFRMYFLVFEGKQFRGGEFIYDVRAKSLPKESNKKILIPLIILALVTTLVGFVGTPFNNMFAKFINLTRLEEHPFEWNEFLSMSGSSVGIALIGLTLASLIYKESKIDANQIANTLTPLYKLSFNKFYIDHIYQIGFIKVNRSLAQKALELDQQIIDGFINFTGFFTIMTGEILKYVENGRVQSYVFVIIFATLIFVLASQGF.

The next 16 membrane-spanning stretches (helical) occupy residues 7–27 (YAWL…LGLI), 40–60 (FAFF…SILI), 89–109 (IDPL…LVMI), 124–144 (FFAY…SPNL), 147–167 (IYVF…FWFT), 185–205 (GDFG…SFEF), 226–246 (HPVQ…GPMA), 265–285 (TPIS…FLVA), 296–316 (IVMG…AIIA), 334–354 (LGYM…FHLI), 361–381 (ALLF…VGFN), 402–422 (AITF…ACFW), 434–454 (AQPI…FYMF), 488–508 (ILIP…VGTP), 533–553 (LSMS…ASLI), and 635–655 (QSYV…SQGF).

This sequence belongs to the complex I subunit 5 family. In terms of assembly, NDH is composed of at least 16 different subunits, 5 of which are encoded in the nucleus.

The protein localises to the plastid. Its subcellular location is the chloroplast thylakoid membrane. It catalyses the reaction a plastoquinone + NADH + (n+1) H(+)(in) = a plastoquinol + NAD(+) + n H(+)(out). It carries out the reaction a plastoquinone + NADPH + (n+1) H(+)(in) = a plastoquinol + NADP(+) + n H(+)(out). Functionally, NDH shuttles electrons from NAD(P)H:plastoquinone, via FMN and iron-sulfur (Fe-S) centers, to quinones in the photosynthetic chain and possibly in a chloroplast respiratory chain. The immediate electron acceptor for the enzyme in this species is believed to be plastoquinone. Couples the redox reaction to proton translocation, and thus conserves the redox energy in a proton gradient. This Chlorokybus atmophyticus (Soil alga) protein is NAD(P)H-quinone oxidoreductase subunit 5, chloroplastic (ndhF).